A 612-amino-acid polypeptide reads, in one-letter code: Kelch repeat and BTB domain-containing protein 3 (612 aa).

Positions 52 to 119 (YDFKIIMKDE…AYTGKTKITD (68 aa)) constitute a BTB domain. Residues 154–254 (CLQLLSISDS…QLSEETLQDC (101 aa)) form the BACK domain. 5 Kelch repeats span residues 295-341 (KYIF…SSYG), 343-403 (KIFL…MALD), 404-454 (RLFV…TCQN), 456-506 (IYVL…KAVP), and 552-599 (KIYI…VIQF).

The chain is Kelch repeat and BTB domain-containing protein 3 from Homo sapiens (Human).